The chain runs to 274 residues: Glutamate racemase (274 aa).

Substrate-binding positions include 10–11 (DS) and 42–43 (YG). Residue cysteine 73 is the Proton donor/acceptor of the active site. Residue 74–75 (NT) coordinates substrate. Cysteine 184 (proton donor/acceptor) is an active-site residue. 185–186 (TH) contacts substrate.

This sequence belongs to the aspartate/glutamate racemases family.

The catalysed reaction is L-glutamate = D-glutamate. The protein operates within cell wall biogenesis; peptidoglycan biosynthesis. In terms of biological role, provides the (R)-glutamate required for cell wall biosynthesis. The protein is Glutamate racemase of Latilactobacillus sakei subsp. sakei (strain 23K) (Lactobacillus sakei subsp. sakei).